A 289-amino-acid polypeptide reads, in one-letter code: Phosphatidylglycerol--prolipoprotein diacylglyceryl transferase (289 aa).

Transmembrane regions (helical) follow at residues 21–41 (IGPLSIRWYGLLIASAVLLGI), 53–73 (IDPNAIADLAVWLVIGAIPAA), 95–115 (IWHGGIAIHGAILGGTAALIL), and 122–142 (IPIWQLTDVVVPSLALGQAIG). Arginine 143 is an a 1,2-diacyl-sn-glycero-3-phospho-(1'-sn-glycerol) binding site. 3 helical membrane-spanning segments follow: residues 182–202 (PTFLYESLWNLLLCLLLIWLF), 215–235 (GVMTCIYLIGYSLGRIWIEGL), and 247–267 (IAQMVSIVAIAFGVLGLVWIY).

Belongs to the Lgt family.

It localises to the cell inner membrane. It carries out the reaction L-cysteinyl-[prolipoprotein] + a 1,2-diacyl-sn-glycero-3-phospho-(1'-sn-glycerol) = an S-1,2-diacyl-sn-glyceryl-L-cysteinyl-[prolipoprotein] + sn-glycerol 1-phosphate + H(+). The protein operates within protein modification; lipoprotein biosynthesis (diacylglyceryl transfer). Catalyzes the transfer of the diacylglyceryl group from phosphatidylglycerol to the sulfhydryl group of the N-terminal cysteine of a prolipoprotein, the first step in the formation of mature lipoproteins. This chain is Phosphatidylglycerol--prolipoprotein diacylglyceryl transferase, found in Synechococcus elongatus (strain ATCC 33912 / PCC 7942 / FACHB-805) (Anacystis nidulans R2).